The sequence spans 514 residues: Na(+)/H(+) antiporter NhaB (514 aa).

The next 12 membrane-spanning stretches (helical) occupy residues Leu23–Ala43, Pro63–Ala83, Leu97–Phe117, Leu120–Phe140, Phe144–Ile164, Leu202–Pro222, Phe238–Met258, Ala303–Ile323, Leu357–Ile377, Leu391–Ile411, Ala447–Ile467, and Val475–Phe495.

This sequence belongs to the NhaB Na(+)/H(+) (TC 2.A.34) antiporter family.

Its subcellular location is the cell inner membrane. It carries out the reaction 2 Na(+)(in) + 3 H(+)(out) = 2 Na(+)(out) + 3 H(+)(in). Na(+)/H(+) antiporter that extrudes sodium in exchange for external protons. The protein is Na(+)/H(+) antiporter NhaB of Salmonella paratyphi A (strain ATCC 9150 / SARB42).